The following is a 433-amino-acid chain: PHO85 cyclin-10 (433 aa).

The segment covering 1–10 (MDMTKNHTTD) has biased composition (basic and acidic residues). 2 disordered regions span residues 1-20 (MDMT…GDIR) and 51-81 (LTSE…TTDS). A compositionally biased stretch (polar residues) spans 51–63 (LTSEWDQSRSNTP).

Belongs to the cyclin family. PHO80 subfamily. In terms of assembly, forms a cyclin-CDK complex with PHO85. Interacts with GSY2, independent of the presence of PHO85.

Its subcellular location is the cytoplasm. Its function is as follows. Cyclin partner of the cyclin-dependent kinase (CDK) PHO85. Together with cyclin PCL8, negatively controls glycogen accumulation under favorable growth conditions. The PCL10-PHO85 cyclin-CDK holoenzyme has glycogen synthase kinase activity and phosphorylates and negatively regulates glycogen synthase GSY2. Also has minor GLC8 kinase activity. In Saccharomyces cerevisiae (strain ATCC 204508 / S288c) (Baker's yeast), this protein is PHO85 cyclin-10 (PCL10).